We begin with the raw amino-acid sequence, 239 residues long: Probable transcriptional regulatory protein Veis_4238 (239 aa).

Positions 1-22 (MAGHSKWANIQHRKGRQDEKRG) are disordered.

Belongs to the TACO1 family.

Its subcellular location is the cytoplasm. The polypeptide is Probable transcriptional regulatory protein Veis_4238 (Verminephrobacter eiseniae (strain EF01-2)).